We begin with the raw amino-acid sequence, 892 residues long: Putative GTP diphosphokinase RSH1, chloroplastic (892 aa).

A chloroplast-targeting transit peptide spans 1–52; it reads MQPPTGAVSGSSSSSLECVSSCRTSWRGGGRPYECSVLSCAWNAPRALTGAL. The HD domain maps to 184–291; the sequence is FIIHPVEVAR…VKLADRLHNM (108 aa). The TGS domain occupies 574–637; the sequence is LGSRVFVFTP…ANAEVVEIII (64 aa). In terms of domain architecture, ACT spans 809-880; the sequence is WLCIVCVDRK…MILGVLGWSV (72 aa).

This sequence belongs to the RelA/SpoT family.

It localises to the plastid. The protein resides in the chloroplast. It carries out the reaction GTP + ATP = guanosine 3'-diphosphate 5'-triphosphate + AMP. May be involved in a rapid plant ppGpp (guanosine 3'-diphosphate 5'-diphosphate)-mediated response to pathogens and other stresses. The polypeptide is Putative GTP diphosphokinase RSH1, chloroplastic (RSH1) (Oryza sativa subsp. japonica (Rice)).